A 240-amino-acid polypeptide reads, in one-letter code: PF03932 family protein CutC (240 aa).

The protein belongs to the CutC family.

It localises to the cytoplasm. This chain is PF03932 family protein CutC, found in Xanthomonas campestris pv. campestris (strain B100).